Here is a 137-residue protein sequence, read N- to C-terminus: ATP synthase epsilon chain (137 aa).

The protein belongs to the ATPase epsilon chain family. In terms of assembly, F-type ATPases have 2 components, CF(1) - the catalytic core - and CF(0) - the membrane proton channel. CF(1) has five subunits: alpha(3), beta(3), gamma(1), delta(1), epsilon(1). CF(0) has three main subunits: a, b and c.

Its subcellular location is the cellular thylakoid membrane. In terms of biological role, produces ATP from ADP in the presence of a proton gradient across the membrane. This Trichormus variabilis (strain ATCC 29413 / PCC 7937) (Anabaena variabilis) protein is ATP synthase epsilon chain.